Here is a 536-residue protein sequence, read N- to C-terminus: Zinc finger protein 394 (536 aa).

Residues 18-45 (AVKVEEDSPGSQEPSGSGDWQNPETSRK) form a disordered region. Lysine 20 is covalently cross-linked (Glycyl lysine isopeptide (Lys-Gly) (interchain with G-Cter in SUMO2)). Over residues 26–41 (PGSQEPSGSGDWQNPE) the composition is skewed to polar residues. An SCAN box domain is found at 44–126 (RKQFRQLRYQ…ALARTLQRAL (83 aa)). Residues 135–196 (ATFKDVAESL…KQEMSKEAES (62 aa)) form the KRAB domain. Glycyl lysine isopeptide (Lys-Gly) (interchain with G-Cter in SUMO2) cross-links involve residues lysine 207 and lysine 260. C2H2-type zinc fingers lie at residues 328–350 (YKCD…QRTH), 356–378 (YQCQ…QRTH), and 384–406 (YACP…QRTH). The segment at 412-433 (CKCEECGEIFHISSLFKHQRLH) adopts a C2H2-type 4; atypical zinc-finger fold. A Glycyl lysine isopeptide (Lys-Gly) (interchain with G-Cter in SUMO2) cross-link involves residue lysine 413. 3 consecutive C2H2-type zinc fingers follow at residues 439 to 461 (HKCE…QRIH), 467 to 489 (YMCF…QRTH), and 495 to 517 (YKCF…QRIH).

Belongs to the krueppel C2H2-type zinc-finger protein family.

It is found in the nucleus. In terms of biological role, may be involved in transcriptional regulation. This Rattus norvegicus (Rat) protein is Zinc finger protein 394 (Znf394).